A 480-amino-acid chain; its full sequence is Bifunctional protein GlmU (480 aa).

Positions 1–247 (MATPIDVVIM…AAQVAGVNSP (247 aa)) are pyrophosphorylase. UDP-N-acetyl-alpha-D-glucosamine-binding positions include lysine 24, glutamine 86, 91 to 92 (GT), 113 to 115 (SGD), glycine 150, glutamate 172, and asparagine 245. Residue aspartate 115 participates in Mg(2+) binding. Asparagine 245 contacts Mg(2+). Residues 248 to 268 (VQLAELERVYQLRQATALMEQ) form a linker region. Residues 269–480 (GVRLADPARF…WKRPVKVSKG (212 aa)) are N-acetyltransferase. The UDP-N-acetyl-alpha-D-glucosamine site is built by arginine 355 and lysine 373. Catalysis depends on histidine 385, which acts as the Proton acceptor. Residues tyrosine 388 and asparagine 399 each contribute to the UDP-N-acetyl-alpha-D-glucosamine site. Acetyl-CoA is bound by residues alanine 402, 408-409 (NY), serine 427, glycine 445, and arginine 462.

In the N-terminal section; belongs to the N-acetylglucosamine-1-phosphate uridyltransferase family. This sequence in the C-terminal section; belongs to the transferase hexapeptide repeat family. Homotrimer. Mg(2+) serves as cofactor.

Its subcellular location is the cytoplasm. The enzyme catalyses alpha-D-glucosamine 1-phosphate + acetyl-CoA = N-acetyl-alpha-D-glucosamine 1-phosphate + CoA + H(+). It catalyses the reaction N-acetyl-alpha-D-glucosamine 1-phosphate + UTP + H(+) = UDP-N-acetyl-alpha-D-glucosamine + diphosphate. Its pathway is nucleotide-sugar biosynthesis; UDP-N-acetyl-alpha-D-glucosamine biosynthesis; N-acetyl-alpha-D-glucosamine 1-phosphate from alpha-D-glucosamine 6-phosphate (route II): step 2/2. It functions in the pathway nucleotide-sugar biosynthesis; UDP-N-acetyl-alpha-D-glucosamine biosynthesis; UDP-N-acetyl-alpha-D-glucosamine from N-acetyl-alpha-D-glucosamine 1-phosphate: step 1/1. It participates in bacterial outer membrane biogenesis; LPS lipid A biosynthesis. In terms of biological role, catalyzes the last two sequential reactions in the de novo biosynthetic pathway for UDP-N-acetylglucosamine (UDP-GlcNAc). The C-terminal domain catalyzes the transfer of acetyl group from acetyl coenzyme A to glucosamine-1-phosphate (GlcN-1-P) to produce N-acetylglucosamine-1-phosphate (GlcNAc-1-P), which is converted into UDP-GlcNAc by the transfer of uridine 5-monophosphate (from uridine 5-triphosphate), a reaction catalyzed by the N-terminal domain. The protein is Bifunctional protein GlmU of Polaromonas sp. (strain JS666 / ATCC BAA-500).